Reading from the N-terminus, the 199-residue chain is Large ribosomal subunit protein bL9 (199 aa).

Residues 169 to 199 (TGGFTEEYDPNAEPGEIPTELLEGGEEAAEA) form a disordered region.

This sequence belongs to the bacterial ribosomal protein bL9 family.

Functionally, binds to the 23S rRNA. The protein is Large ribosomal subunit protein bL9 of Novosphingobium aromaticivorans (strain ATCC 700278 / DSM 12444 / CCUG 56034 / CIP 105152 / NBRC 16084 / F199).